The chain runs to 259 residues: MDSTNQNLFASLSKKGPVRKENQDFSVVTFNRFGQLMSLVCDGLGGYKGGKMASALVSEVFTKSFTVFDFHSQTERAVKQWFEITLIEARRTLEQYFQTIKRNQVQFARMATTLVLSIISKQNIWTFWVGDSRAYLINSYQSLQITEDHNLYNQLLQMHATPDVIASYKDKLLALTATVSKDQERQLKYSFRCDVVNAWDFLLLCSDGLYNFLDPNCFYEVITSAPNLKKAVTQLAKLSLDNASNDNITLNLINLKQWH.

The 248-residue stretch at 8-255 (LFASLSKKGP…DNITLNLINL (248 aa)) folds into the PPM-type phosphatase domain.

It catalyses the reaction O-phospho-L-seryl-[protein] + H2O = L-seryl-[protein] + phosphate. The catalysed reaction is O-phospho-L-threonyl-[protein] + H2O = L-threonyl-[protein] + phosphate. The chain is Putative protein phosphatase from Mycoplasma pneumoniae (strain ATCC 29342 / M129 / Subtype 1) (Mycoplasmoides pneumoniae).